A 111-amino-acid chain; its full sequence is Antitoxin PrlF (111 aa).

Residues 12–59 (TTESKVTIRGQTTIPAPVREALKLKPGLDSIHYEILPGGQVFMCRLGD) form the SpoVT-AbrB domain.

In terms of assembly, homodimer; forms a complex with YhaV with stoichiometry PrlF(2)-YhaV(4), possibly as a YhaV(2)-PrlF(2)-YhaV(2) complex like the MazFE complex.

The protein resides in the cytoplasm. Antitoxin component of a type II toxin-antitoxin (TA) system. Labile antitoxin that binds to the YhaV toxin and neutralizes its ribonuclease activity. Also acts as a transcription factor. The YhaV/PrlF complex binds the prlF-yhaV operon, probably negatively regulating its expression. The sequence is that of Antitoxin PrlF (prlF) from Escherichia coli O6:H1 (strain CFT073 / ATCC 700928 / UPEC).